Consider the following 320-residue polypeptide: Cytochrome f (320 aa).

The first 35 residues, 1-35 (MQNRNTFLGVKEQITRSIFVSIMIYVITRASISNA), serve as a signal peptide directing secretion. Heme is bound by residues Tyr-36, Cys-56, Cys-59, and His-60. The chain crosses the membrane as a helical span at residues 286-306 (IQGLLFFLASVILAQIFLVLK).

It belongs to the cytochrome f family. In terms of assembly, the 4 large subunits of the cytochrome b6-f complex are cytochrome b6, subunit IV (17 kDa polypeptide, petD), cytochrome f and the Rieske protein, while the 4 small subunits are PetG, PetL, PetM and PetN. The complex functions as a dimer. Heme serves as cofactor.

The protein resides in the plastid. Its subcellular location is the chloroplast thylakoid membrane. In terms of biological role, component of the cytochrome b6-f complex, which mediates electron transfer between photosystem II (PSII) and photosystem I (PSI), cyclic electron flow around PSI, and state transitions. This chain is Cytochrome f, found in Dioscorea elephantipes (Elephant's foot yam).